The chain runs to 1230 residues: ATP-dependent helicase/nuclease subunit A (1230 aa).

The UvrD-like helicase ATP-binding domain occupies 9–480 (STWTDDQWKA…IDLNKNFRSR (472 aa)). Position 30 to 37 (30 to 37 (AAAGSGKT)) interacts with ATP. A UvrD-like helicase C-terminal domain is found at 507 to 796 (QAELKLGASY…RLMTIHSSKG (290 aa)).

The protein belongs to the helicase family. AddA subfamily. In terms of assembly, heterodimer of AddA and AddB/RexB. It depends on Mg(2+) as a cofactor.

It catalyses the reaction Couples ATP hydrolysis with the unwinding of duplex DNA by translocating in the 3'-5' direction.. The enzyme catalyses ATP + H2O = ADP + phosphate + H(+). Functionally, the heterodimer acts as both an ATP-dependent DNA helicase and an ATP-dependent, dual-direction single-stranded exonuclease. Recognizes the chi site generating a DNA molecule suitable for the initiation of homologous recombination. The AddA nuclease domain is required for chi fragment generation; this subunit has the helicase and 3' -&gt; 5' nuclease activities. The chain is ATP-dependent helicase/nuclease subunit A from Bacillus licheniformis (strain ATCC 14580 / DSM 13 / JCM 2505 / CCUG 7422 / NBRC 12200 / NCIMB 9375 / NCTC 10341 / NRRL NRS-1264 / Gibson 46).